Consider the following 297-residue polypeptide: ATP phosphoribosyltransferase (297 aa).

Belongs to the ATP phosphoribosyltransferase family.

The protein resides in the cytoplasm. The catalysed reaction is 1-(5-phospho-beta-D-ribosyl)-ATP + diphosphate = 5-phospho-alpha-D-ribose 1-diphosphate + ATP. It participates in amino-acid biosynthesis; L-histidine biosynthesis; L-histidine from 5-phospho-alpha-D-ribose 1-diphosphate: step 1/9. In terms of biological role, catalyzes the condensation of ATP and 5-phosphoribose 1-diphosphate to form N'-(5'-phosphoribosyl)-ATP (PR-ATP). Has a crucial role in the pathway because the rate of histidine biosynthesis seems to be controlled primarily by regulation of the enzymatic activity. The sequence is that of ATP phosphoribosyltransferase (HIS1) from Eremothecium gossypii (strain ATCC 10895 / CBS 109.51 / FGSC 9923 / NRRL Y-1056) (Yeast).